Reading from the N-terminus, the 218-residue chain is Hypoxanthine-guanine phosphoribosyltransferase (218 aa).

Lys-69 provides a ligand contact to GMP. Lys-103 carries the N6-acetyllysine modification. Lys-115 is covalently cross-linked (Glycyl lysine isopeptide (Lys-Gly) (interchain with G-Cter in SUMO1); alternate). Lys-115 is covalently cross-linked (Glycyl lysine isopeptide (Lys-Gly) (interchain with G-Cter in SUMO2); alternate). GMP-binding positions include 134 to 142 (EDIIDTGKT), Lys-166, 186 to 188 (KFV), and Asp-194. Residue Asp-138 is the Proton acceptor of the active site. Thr-142 bears the Phosphothreonine mark. A Mg(2+)-binding site is contributed by Asp-194.

This sequence belongs to the purine/pyrimidine phosphoribosyltransferase family. Homotetramer. The cofactor is Mg(2+).

The protein resides in the cytoplasm. The enzyme catalyses IMP + diphosphate = hypoxanthine + 5-phospho-alpha-D-ribose 1-diphosphate. It carries out the reaction GMP + diphosphate = guanine + 5-phospho-alpha-D-ribose 1-diphosphate. It participates in purine metabolism; IMP biosynthesis via salvage pathway; IMP from hypoxanthine: step 1/1. In terms of biological role, converts guanine to guanosine monophosphate, and hypoxanthine to inosine monophosphate. Transfers the 5-phosphoribosyl group from 5-phosphoribosylpyrophosphate onto the purine. Plays a central role in the generation of purine nucleotides through the purine salvage pathway. The protein is Hypoxanthine-guanine phosphoribosyltransferase (Hprt1) of Mus musculus (Mouse).